Here is an 86-residue protein sequence, read N- to C-terminus: Small ribosomal subunit protein bS20 (86 aa).

It belongs to the bacterial ribosomal protein bS20 family.

Functionally, binds directly to 16S ribosomal RNA. The protein is Small ribosomal subunit protein bS20 of Mycolicibacterium gilvum (strain PYR-GCK) (Mycobacterium gilvum (strain PYR-GCK)).